Here is a 186-residue protein sequence, read N- to C-terminus: Ribosome-recycling factor (186 aa).

Belongs to the RRF family.

The protein resides in the cytoplasm. Its function is as follows. Responsible for the release of ribosomes from messenger RNA at the termination of protein biosynthesis. May increase the efficiency of translation by recycling ribosomes from one round of translation to another. This is Ribosome-recycling factor from Rickettsia peacockii (strain Rustic).